The sequence spans 34 residues: METNDLGFVATLLFVLVPAIFLIILYIQTNSREG.

Residues 7–27 (GFVATLLFVLVPAIFLIILYI) traverse the membrane as a helical segment.

The protein belongs to the PsbM family. In terms of assembly, PSII is composed of 1 copy each of membrane proteins PsbA, PsbB, PsbC, PsbD, PsbE, PsbF, PsbH, PsbI, PsbJ, PsbK, PsbL, PsbM, PsbT, PsbX, PsbY, PsbZ, Psb30/Ycf12, peripheral proteins PsbO, CyanoQ (PsbQ), PsbU, PsbV and a large number of cofactors. It forms dimeric complexes.

It localises to the cellular thylakoid membrane. In terms of biological role, one of the components of the core complex of photosystem II (PSII). PSII is a light-driven water:plastoquinone oxidoreductase that uses light energy to abstract electrons from H(2)O, generating O(2) and a proton gradient subsequently used for ATP formation. It consists of a core antenna complex that captures photons, and an electron transfer chain that converts photonic excitation into a charge separation. This subunit is found at the monomer-monomer interface. In Synechococcus sp. (strain RCC307), this protein is Photosystem II reaction center protein M.